The chain runs to 331 residues: Ribose operon repressor (331 aa).

The HTH lacI-type domain maps to 1-56 (MTTIRDVAKHAKVSVATVSRVLNKKGYVSKEAEEAVLQAIKELNYQPSSVARSLYH). A DNA-binding region (H-T-H motif) is located at residues 4–23 (IRDVAKHAKVSVATVSRVLN).

Its function is as follows. Transcriptional repressor for the ribose rbsDACBK operon. This is Ribose operon repressor (rbsR) from Halalkalibacterium halodurans (strain ATCC BAA-125 / DSM 18197 / FERM 7344 / JCM 9153 / C-125) (Bacillus halodurans).